The primary structure comprises 503 residues: Maturase K (503 aa).

This sequence belongs to the intron maturase 2 family. MatK subfamily.

It is found in the plastid. Its subcellular location is the chloroplast. Its function is as follows. Usually encoded in the trnK tRNA gene intron. Probably assists in splicing its own and other chloroplast group II introns. The polypeptide is Maturase K (Rosa foetida (Austrian briar)).